A 137-amino-acid chain; its full sequence is Basic phospholipase A2 homolog bothropstoxin-I (137 aa).

The first 16 residues, 1–16, serve as a signal peptide directing secretion; sequence MRTLWIMAVLLVGVEG. Disulfide bonds link Cys-42-Cys-131, Cys-44-Cys-60, Cys-59-Cys-111, Cys-65-Cys-137, Cys-66-Cys-104, Cys-73-Cys-97, and Cys-91-Cys-102. The segment at 121 to 133 is important for membrane-damaging activities in eukaryotes and bacteria; heparin-binding; the sequence is KKYRYHLKPFCKK.

This sequence belongs to the phospholipase A2 family. Group II subfamily. K49 sub-subfamily. Homodimer; non-covalently linked (probable alternative/compact dimer conformation in solution). Binds to heparin. Expressed by the venom gland.

The protein localises to the secreted. Suramin inhibits both myotoxic and muscle-paralyzing activities. Chicoric acid inhibits myotoxic activity. Zinc ions inhibits the myotoxic activity and the neuromuscular blockade. Heparin inhibits myotoxic activity. In terms of biological role, snake venom phospholipase A2 homolog that lacks enzymatic activity. Shows local myotoxic activity. Induces inflammation, since it induces edema and leukocytes infiltration. In addition, it induces NLRP3 NLRP3, ASC (PYCARD), caspase-1 (CASP1), and IL-1beta (IL1B) gene expression in the gastrocnemius muscle, showing that it is able to activate NLRP3 inflammasome. It also damages artificial and myoblast membranes by a calcium-independent mechanism, has bactericidal activity, and induces neuromuscular blockade. A model of myotoxic mechanism has been proposed: an apo Lys49-PLA2 is activated by the entrance of a hydrophobic molecule (e.g. fatty acid) at the hydrophobic channel of the protein leading to a reorientation of a monomer. This reorientation causes a transition between 'inactive' to 'active' states, causing alignment of C-terminal and membrane-docking sites (MDoS) side-by-side and putting the membrane-disruption sites (MDiS) in the same plane, exposed to solvent and in a symmetric position for both monomers. The MDoS region stabilizes the toxin on membrane by the interaction of charged residues with phospholipid head groups. Subsequently, the MDiS region destabilizes the membrane with penetration of hydrophobic residues. This insertion causes a disorganization of the membrane, allowing an uncontrolled influx of ions (i.e. calcium and sodium), and eventually triggering irreversible intracellular alterations and cell death. The protein is Basic phospholipase A2 homolog bothropstoxin-I of Bothrops jararacussu (Jararacussu).